Consider the following 177-residue polypeptide: Translationally-controlled tumor protein homolog (177 aa).

Residues 1–177 form the TCTP domain; that stretch reads MIIYRDLFSG…IKQGLVVEKC (177 aa).

It belongs to the TCTP family.

Its subcellular location is the cytoplasm. Involved in calcium binding and microtubule stabilization. This Trichinella pseudospiralis (Parasitic roundworm) protein is Translationally-controlled tumor protein homolog.